Reading from the N-terminus, the 173-residue chain is MTFDAFTKVVAQADARGEFLSDAQLDALSRLVAEGNKRIDTVNRITGNASSIVANAARALFAEQPSLIAPGGNAYTNRRMAACLRDMEIILRYVTYAVFTGDASILDDRCLNGLRETYLALGVPGASVAEGVRKMKDAAVAIVSDRNGITQGDCSAIISELGSYFDKAAAAVA.

Asparagine 73 bears the N4-methylasparagine mark. Residues cysteine 83 and cysteine 154 each coordinate (2R,3E)-phycocyanobilin.

This sequence belongs to the phycobiliprotein family. Heterodimer of an alpha and a beta subunit, which further assembles into trimers and the trimers into hexamers. Post-translationally, contains two covalently linked bilin chromophores.

It is found in the cellular thylakoid membrane. Its function is as follows. Light-harvesting photosynthetic bile pigment-protein from the phycobiliprotein complex (phycobilisome, PBS). Phycocyanin is the major phycobiliprotein in the PBS rod. The chain is C-phycocyanin beta subunit (cpcB1) from Synechococcus elongatus (strain ATCC 33912 / PCC 7942 / FACHB-805) (Anacystis nidulans R2).